Consider the following 214-residue polypeptide: Epoxide hydrolase EphH (214 aa).

Ser-28 functions as the Nucleophile in the catalytic mechanism. Catalysis depends on charge relay system residues Asp-156 and His-186.

Belongs to the AB hydrolase superfamily.

It catalyses the reaction an epoxide + H2O = an ethanediol. Inhibited by AUDA, a known epoxide hydrolase inhibitor. Functionally, catalyzes the hydrolysis of epoxide-containing substrates. In vitro, catalyzes the hydrolysis of the synthetic compounds PHOME and styrene oxide. Plays an essential role in subverting phagosomal acidification. Plays a major role in the survival of M.tuberculosis (Mtb) during in vitro acidic stress and protects Mtb in response to phagosomal acidification inside macrophages. Also supports Mtb growth under the nutrient-deprived condition at pH 7.0. In Mycobacterium tuberculosis (strain ATCC 25618 / H37Rv), this protein is Epoxide hydrolase EphH.